The sequence spans 628 residues: Putative lipase ATG15 (628 aa).

Topologically, residues 1–32 are cytoplasmic; the sequence is MLAAEKRRLLHKTRPVSASEKPGSIYPQRALY. Residues 33-53 form a helical; Signal-anchor for type II membrane protein membrane-spanning segment; that stretch reads LLVCFSIATISLGYLHFIGAI. Over 54–628 the chain is Lumenal; it reads DIGRFGISSV…GYDGDVDDDQ (575 aa). N261, N299, and N383 each carry an N-linked (GlcNAc...) asparagine glycan. Residue S401 is the Charge relay system of the active site. N518 is a glycosylation site (N-linked (GlcNAc...) asparagine). Positions 540-605 are disordered; sequence HDDDVPDEPE…ISEPSESPKK (66 aa). Residues 562-586 are compositionally biased toward low complexity; it reads PSSSTSDGKNNRISSTATTTISPTS. A compositionally biased stretch (polar residues) spans 591-600; it reads PTSSDISEPS.

Belongs to the AB hydrolase superfamily. Lipase family. As to quaternary structure, binds to both phosphatidylinositol (PI) and phosphatidylinositol 3,5-bisphosphate (PIP2).

The protein localises to the endosome. Its subcellular location is the multivesicular body membrane. It is found in the prevacuolar compartment membrane. The enzyme catalyses a triacylglycerol + H2O = a diacylglycerol + a fatty acid + H(+). In terms of biological role, lipase which is essential for lysis of subvacuolar cytoplasm to vacuole targeted bodies and intravacuolar autophagic bodies. Involved in the lysis of intravacuolar multivesicular body (MVB) vesicles. The intravacuolar membrane disintegration by ATG15 is critical to life span extension. The sequence is that of Putative lipase ATG15 (ATG15) from Scheffersomyces stipitis (strain ATCC 58785 / CBS 6054 / NBRC 10063 / NRRL Y-11545) (Yeast).